Consider the following 577-residue polypeptide: MKRTALIGQLSTTHLDQAVTLQGWVNRRRDLGGLIFLELRDRSGLVQVQVEPDSPAFAQADQLRAEYVAEVEGIYRARPENQRKGGAADYEVIASRVKVLNTAKTPPFELDKGESVAEDIRLKYRYLDLRRPEMQRHLLLRSRAMAAVTAFLDSSGFVQVETPMLTKSTPEGARDFLVPSRLNPGEFYALPQSPQLFKQLLMIAGYDRYYQFARCFRDEDLRADRQPDFTQLDMEMSFVEQDDVLELQEGLMAHVFKATLDVDLPRPFPRLSYFDAMDRYGSDKPDLRFESALVDVTDLFQGGEFKAFAAAQSVKVLAAAELTRKQIDELERVAKQNGAGGLAWLKRDGDSFTGGISKFVGSVAPQLIKRSGVQDGGTLLFAAGDWKKAVTALGAVRLAVRDLFDLTSSGPRFHVSWVTDFPQLEFDEDSGTWTYMHHPFTAPHPDDAELFGTLRQGEIRAQAYDLVLNGFEVGGGSVRIHDPAVQTKMFEAIGFTEAQAREKFGFFMDALEYGTPPHGGIAWGFDRLVMVMSGASSIREVIAFPKNNRGADLMAEAPSLVDDAQLAELGVGVLSPS.

E171 contributes to the L-aspartate binding site. The aspartate stretch occupies residues 195 to 198 (QLFK). L-aspartate is bound at residue R217. Residues 217-219 (RDE) and Q226 contribute to the ATP site. H437 is an L-aspartate binding site. E472 is a binding site for ATP. L-aspartate is bound at residue R479. 524–527 (GFDR) lines the ATP pocket.

Belongs to the class-II aminoacyl-tRNA synthetase family. Type 1 subfamily. As to quaternary structure, homodimer.

It localises to the cytoplasm. The catalysed reaction is tRNA(Asp) + L-aspartate + ATP = L-aspartyl-tRNA(Asp) + AMP + diphosphate. In terms of biological role, catalyzes the attachment of L-aspartate to tRNA(Asp) in a two-step reaction: L-aspartate is first activated by ATP to form Asp-AMP and then transferred to the acceptor end of tRNA(Asp). The chain is Aspartate--tRNA ligase from Deinococcus deserti (strain DSM 17065 / CIP 109153 / LMG 22923 / VCD115).